We begin with the raw amino-acid sequence, 984 residues long: Putative formate dehydrogenase SA2102 (984 aa).

The region spanning 3-79 (EHLVVTLDGK…PMTVNTVNND (77 aa)) is the 2Fe-2S ferredoxin-type domain. Residues Cys-37, Cys-48, Cys-51, and Cys-63 each coordinate [2Fe-2S] cluster. One can recognise a 4Fe-4S His(Cys)3-ligated-type domain in the interval 79 to 119 (DVKDAQKEALDRILEKHMLYCTVCDYNNGDCEIHNTMDAWG). 16 residues coordinate [4Fe-4S] cluster: His-95, Cys-99, Cys-102, Cys-109, Cys-147, Cys-150, Cys-153, Cys-157, Cys-190, Cys-193, Cys-196, Cys-200, Cys-264, Cys-267, Cys-271, and Cys-299. 4Fe-4S ferredoxin-type domains lie at 138 to 165 (PFYRYDPNQCILCGRCVEACQDIEVNET) and 181 to 211 (NDVPINESSCVSCGQCATVCPCNAMMEVNME). Residues 252-984 (MRKERIKKTK…YVFPGNQVDK (733 aa)) form a formate dehydrogenase region. Residues 257 to 313 (IKKTKTVCTYCGVGCSFEVWTKDREILKVQPSHDSPANKIATCVKGKFSWGHINSDQ) form the 4Fe-4S Mo/W bis-MGD-type domain.

This sequence in the C-terminal section; belongs to the prokaryotic molybdopterin-containing oxidoreductase family. [2Fe-2S] cluster serves as cofactor. Requires [4Fe-4S] cluster as cofactor. The cofactor is Mo-bis(molybdopterin guanine dinucleotide).

The catalysed reaction is formate + NAD(+) = CO2 + NADH. The protein is Putative formate dehydrogenase SA2102 of Staphylococcus aureus (strain N315).